The chain runs to 311 residues: Protoheme IX farnesyltransferase (311 aa).

8 helical membrane passes run 30 to 50 (VVQLIVFCAAIGMLLAVPGWP), 55 to 75 (WGVALAASIGIWLVASAAAAF), 108 to 128 (FAVLLCAAGMAVLWVWVNALT), 129 to 149 (MWLTFATFVGYAVIYTVLLKP), 153 to 173 (QNIVIGGASGAMPPVLGWAAM), 182 to 202 (WILCLIIFLWTPPHFWALALY), 233 to 253 (FVLFAATLLPFVYGMSGWFYL), and 287 to 307 (IWHLSLLFAALLLDHYLGPLL).

This sequence belongs to the UbiA prenyltransferase family. Protoheme IX farnesyltransferase subfamily.

The protein localises to the cell inner membrane. The enzyme catalyses heme b + (2E,6E)-farnesyl diphosphate + H2O = Fe(II)-heme o + diphosphate. The protein operates within porphyrin-containing compound metabolism; heme O biosynthesis; heme O from protoheme: step 1/1. In terms of biological role, converts heme B (protoheme IX) to heme O by substitution of the vinyl group on carbon 2 of heme B porphyrin ring with a hydroxyethyl farnesyl side group. The sequence is that of Protoheme IX farnesyltransferase from Methylibium petroleiphilum (strain ATCC BAA-1232 / LMG 22953 / PM1).